We begin with the raw amino-acid sequence, 176 residues long: NAD(P)H-quinone oxidoreductase subunit 6, chloroplastic (176 aa).

The next 5 helical transmembrane spans lie at 10–30 (FLLV…VFLP), 33–53 (IYSA…YILL), 61–81 (AQLL…VMFM), 92–112 (LWTV…ISLI), and 153–173 (FLPF…AIAI).

Belongs to the complex I subunit 6 family. In terms of assembly, NDH is composed of at least 16 different subunits, 5 of which are encoded in the nucleus.

The protein resides in the plastid. It is found in the chloroplast thylakoid membrane. It catalyses the reaction a plastoquinone + NADH + (n+1) H(+)(in) = a plastoquinol + NAD(+) + n H(+)(out). It carries out the reaction a plastoquinone + NADPH + (n+1) H(+)(in) = a plastoquinol + NADP(+) + n H(+)(out). NDH shuttles electrons from NAD(P)H:plastoquinone, via FMN and iron-sulfur (Fe-S) centers, to quinones in the photosynthetic chain and possibly in a chloroplast respiratory chain. The immediate electron acceptor for the enzyme in this species is believed to be plastoquinone. Couples the redox reaction to proton translocation, and thus conserves the redox energy in a proton gradient. This chain is NAD(P)H-quinone oxidoreductase subunit 6, chloroplastic (ndhG), found in Jasminum nudiflorum (Winter jasmine).